Here is a 216-residue protein sequence, read N- to C-terminus: L-fuculose phosphate aldolase (216 aa).

Substrate contacts are provided by residues 28-29 (GN), 43-44 (TG), and 71-72 (SS). Glu-73 functions as the Proton donor/acceptor in the catalytic mechanism. Residues Glu-73, His-92, His-94, and His-155 each contribute to the Zn(2+) site.

The protein belongs to the aldolase class II family. AraD/FucA subfamily. As to quaternary structure, homotetramer. Zn(2+) serves as cofactor.

The catalysed reaction is L-fuculose 1-phosphate = (S)-lactaldehyde + dihydroxyacetone phosphate. It participates in carbohydrate degradation; L-fucose degradation; L-lactaldehyde and glycerone phosphate from L-fucose: step 3/3. Its function is as follows. Involved in the degradation of L-fucose and D-arabinose. Catalyzes the reversible cleavage of L-fuculose 1-phosphate (Fuc1P) to yield dihydroxyacetone phosphate (DHAP) and L-lactaldehyde. The chain is L-fuculose phosphate aldolase from Haemophilus influenzae (strain ATCC 51907 / DSM 11121 / KW20 / Rd).